Here is a 162-residue protein sequence, read N- to C-terminus: Large ribosomal subunit protein uL10 (162 aa).

This sequence belongs to the universal ribosomal protein uL10 family. As to quaternary structure, part of the ribosomal stalk of the 50S ribosomal subunit. The N-terminus interacts with L11 and the large rRNA to form the base of the stalk. The C-terminus forms an elongated spine to which L12 dimers bind in a sequential fashion forming a multimeric L10(L12)X complex.

Its function is as follows. Forms part of the ribosomal stalk, playing a central role in the interaction of the ribosome with GTP-bound translation factors. In Acholeplasma laidlawii (strain PG-8A), this protein is Large ribosomal subunit protein uL10.